Reading from the N-terminus, the 155-residue chain is Small ribosomal subunit protein uS7 (155 aa).

The protein belongs to the universal ribosomal protein uS7 family. As to quaternary structure, part of the 30S ribosomal subunit. Contacts proteins S9 and S11.

In terms of biological role, one of the primary rRNA binding proteins, it binds directly to 16S rRNA where it nucleates assembly of the head domain of the 30S subunit. Is located at the subunit interface close to the decoding center, probably blocks exit of the E-site tRNA. The chain is Small ribosomal subunit protein uS7 from Xylella fastidiosa (strain M23).